The primary structure comprises 107 residues: Putative pterin-4-alpha-carbinolamine dehydratase (107 aa).

It belongs to the pterin-4-alpha-carbinolamine dehydratase family.

The enzyme catalyses (4aS,6R)-4a-hydroxy-L-erythro-5,6,7,8-tetrahydrobiopterin = (6R)-L-erythro-6,7-dihydrobiopterin + H2O. This chain is Putative pterin-4-alpha-carbinolamine dehydratase, found in Paracoccus denitrificans (strain Pd 1222).